A 95-amino-acid chain; its full sequence is Histone-like DNA-binding protein (95 aa).

Belongs to the bacterial histone-like protein family.

This chain is Histone-like DNA-binding protein, found in Rickettsia conorii (strain ATCC VR-613 / Malish 7).